Here is a 142-residue protein sequence, read N- to C-terminus: Small ribosomal subunit protein uS12 (142 aa).

It belongs to the universal ribosomal protein uS12 family. Part of the 30S ribosomal subunit.

In terms of biological role, with S4 and S5 plays an important role in translational accuracy. Located at the interface of the 30S and 50S subunits. The chain is Small ribosomal subunit protein uS12 from Methanoculleus marisnigri (strain ATCC 35101 / DSM 1498 / JR1).